We begin with the raw amino-acid sequence, 1555 residues long: Regulating synaptic membrane exocytosis protein 2 (1555 aa).

The disordered stretch occupies residues 1–35 (MSAPLGPRGRPAPTPAASQPPPQPEMPDLSHLTEE). Pro residues predominate over residues 10 to 25 (RPAPTPAASQPPPQPE). Residues 26–154 (MPDLSHLTEE…TKSGAWFYNS (129 aa)) enclose the RabBD domain. The segment at 86 to 142 (KGDAPTCGICHKTKFADGCGHNCSYCQTKFCARCGGRVSLRSNKVMWVCNLCRKQQE) adopts an FYVE-type zinc-finger fold. Positions 92, 95, 108, 111, 116, 119, 134, and 137 each coordinate Zn(2+). A compositionally biased stretch (polar residues) spans 154 to 163 (SGSNTPQQPD). Residues 154–530 (SGSNTPQQPD…STPEYTSCDD (377 aa)) are disordered. Positions 170–185 (LRSEEAPQEKKAKLHE) are enriched in basic and acidic residues. Residues 259-268 (YVPSDSTMPR) are compositionally biased toward polar residues. Basic and acidic residues-rich tracts occupy residues 287 to 298 (EPDHLNYRDSNR), 317 to 335 (RDEYERQRREEEYQARYRS), 351 to 370 (EQMRIHAEVSRARHERRHSD), and 379 to 403 (EDSRISLLRMDRPSRQRSVSERRAA). Ser369 is subject to Phosphoserine. Residues 418–432 (AQGQSSYPQRTTNHS) show a composition bias toward polar residues. The segment covering 444 to 461 (DRPELRRADSLRKQHHLD) has biased composition (basic and acidic residues). Residues 479–490 (RNDSLSSDQSES) are compositionally biased toward polar residues. Residues 497–506 (RPHKSKKGGK) show a composition bias toward basic residues. Residues 590–676 (DGSVPRDSGA…EPQVELVVSR (87 aa)) form the PDZ domain. Phosphothreonine is present on Thr611. Residues 682 to 716 (PRIPDSTHAQLESSSSSFESQKMDRPSISVTSPMS) form a disordered region. A phosphoserine mark is found at Ser713 and Ser716. Positions 743 to 866 (FVPRVQIKLW…ALLDDEPHWY (124 aa)) constitute a C2 1 domain. Disordered stretches follow at residues 877–913 (PLPHPSPYMPRRQLHGESPTRRLQRSKRISDSEVSDY), 935–1145 (STLS…KRNS), 1180–1207 (YRSGWDPHRGADTVSTKSSDSDVSDVSA), 1268–1288 (LEKNDGSQSDTAVGALGTSGK), and 1307–1332 (KSRSASQLSQTEGGGKKLRSTVQRST). Residues 935-953 (STLSVPEQVMSSNHCSPSG) show a composition bias toward polar residues. Composition is skewed to basic and acidic residues over residues 996–1014 (RMDRHRVMDDHYSSERDSH) and 1025–1071 (QTSE…ERAD). Residues 1092-1114 (ALSRSHPRTGSVQTSPSSTPVTG) show a composition bias toward low complexity. The residue at position 1106 (Ser1106) is a Phosphoserine. 2 stretches are compositionally biased toward basic and acidic residues: residues 1128–1141 (TLERMITEDMDSTR) and 1180–1190 (YRSGWDPHRGA). 2 positions are modified to phosphoserine: Ser1200 and Ser1276. The C2 2 domain occupies 1401–1519 (AMGDIQVGMM…ELSNMVIGWF (119 aa)). 2 positions are modified to phosphoserine: Ser1540 and Ser1543.

As to quaternary structure, heterodimer with PCLO. Part of a ternary complex involving PCLO and EPAC2. Interacts with RAB3C, RAB3D and RAB26. Binds RAB3A and RAB3B that have been activated by GTP-binding. Interacts with TSPOAP1 and RIMBP2. Interacts with PPFIA3 and PPFIA4. Interacts via its zinc finger with the first C2 domain of UNC13A. Forms a complex consisting of UNC13A, RIMS2 and RAB3A. In terms of tissue distribution, highly expressed in hippocampus, brain cortex, cerebellum and olfactory bulb. Detected at intermediate levels in midbrain, hindbrain and spinal cord, and at low levels in testis.

It localises to the cell membrane. Its subcellular location is the synapse. The protein resides in the presynaptic cell membrane. In terms of biological role, rab effector involved in exocytosis. May act as scaffold protein. Plays a role in dendrite formation by melanocytes. In Rattus norvegicus (Rat), this protein is Regulating synaptic membrane exocytosis protein 2 (Rims2).